The chain runs to 277 residues: Caspase-3 (277 aa).

Residue methionine 1 is modified to N-acetylmethionine. 2 propeptides span residues 1-9 and 10-28; these read MENTENSVD and SKSIKNLEPKIIHGSESMD. Position 11 is an N6-acetyllysine (lysine 11). The residue at position 26 (serine 26) is a Phosphoserine. Residues histidine 121 and cysteine 163 contribute to the active site. Position 163 is an S-nitrosocysteine; in inhibited form (cysteine 163). The residue at position 207 (arginine 207) is a (Microbial infection) ADP-riboxanated arginine.

Belongs to the peptidase C14A family. Heterotetramer that consists of two anti-parallel arranged heterodimers, each one formed by a 17 kDa (p17) and a 12 kDa (p12) subunit. Interacts with BIRC6/bruce. In terms of processing, cleavage by granzyme B, caspase-6, caspase-8 and caspase-10 generates the two active subunits. Additional processing of the propeptides is likely due to the autocatalytic activity of the activated protease. Active heterodimers between the small subunit of caspase-7 protease and the large subunit of caspase-3 also occur and vice versa. S-nitrosylated on its catalytic site cysteine in unstimulated human cell lines and denitrosylated upon activation of the Fas apoptotic pathway, associated with an increase in intracellular caspase activity. Fas therefore activates caspase-3 not only by inducing the cleavage of the caspase zymogen to its active subunits, but also by stimulating the denitrosylation of its active site thiol. Post-translationally, ubiquitinated by BIRC6; this activity is inhibited by DIABLO/SMAC. In terms of processing, (Microbial infection) ADP-riboxanation by C.violaceum CopC blocks CASP3 processing, preventing CASP3 activation and ability to recognize and cleave substrates. In terms of tissue distribution, highly expressed in lung, spleen, heart, liver and kidney. Moderate levels in brain and skeletal muscle, and low in testis. Also found in many cell lines, highest expression in cells of the immune system.

It localises to the cytoplasm. The enzyme catalyses Strict requirement for an Asp residue at positions P1 and P4. It has a preferred cleavage sequence of Asp-Xaa-Xaa-Asp-|- with a hydrophobic amino-acid residue at P2 and a hydrophilic amino-acid residue at P3, although Val or Ala are also accepted at this position.. Inhibited by isatin sulfonamides. Inhibited by BIRC6; following inhibition of BIRC6-caspase binding by DIABLO/SMAC, BIRC6 is subjected to caspase cleavage, leading to an increase in active caspases. Functionally, thiol protease that acts as a major effector caspase involved in the execution phase of apoptosis. Following cleavage and activation by initiator caspases (CASP8, CASP9 and/or CASP10), mediates execution of apoptosis by catalyzing cleavage of many proteins. At the onset of apoptosis, it proteolytically cleaves poly(ADP-ribose) polymerase PARP1 at a '216-Asp-|-Gly-217' bond. Cleaves and activates sterol regulatory element binding proteins (SREBPs) between the basic helix-loop-helix leucine zipper domain and the membrane attachment domain. Cleaves and activates caspase-6, -7 and -9 (CASP6, CASP7 and CASP9, respectively). Cleaves and inactivates interleukin-18 (IL18). Involved in the cleavage of huntingtin. Triggers cell adhesion in sympathetic neurons through RET cleavage. Cleaves and inhibits serine/threonine-protein kinase AKT1 in response to oxidative stress. Acts as an inhibitor of type I interferon production during virus-induced apoptosis by mediating cleavage of antiviral proteins CGAS, IRF3 and MAVS, thereby preventing cytokine overproduction. Also involved in pyroptosis by mediating cleavage and activation of gasdermin-E (GSDME). Cleaves XRCC4 and phospholipid scramblase proteins XKR4, XKR8 and XKR9, leading to promote phosphatidylserine exposure on apoptotic cell surface. Cleaves BIRC6 following inhibition of BIRC6-caspase binding by DIABLO/SMAC. The sequence is that of Caspase-3 (CASP3) from Homo sapiens (Human).